The following is a 60-amino-acid chain: Large ribosomal subunit protein uL30 (60 aa).

This sequence belongs to the universal ribosomal protein uL30 family. As to quaternary structure, part of the 50S ribosomal subunit.

In Lactiplantibacillus plantarum (strain ATCC BAA-793 / NCIMB 8826 / WCFS1) (Lactobacillus plantarum), this protein is Large ribosomal subunit protein uL30.